The following is a 280-amino-acid chain: Octanoyl-[GcvH]:protein N-octanoyltransferase (280 aa).

The 206-residue stretch at 40–245 (QERGAVLRAW…VLSTVSLLQN (206 aa)) folds into the BPL/LPL catalytic domain. The active-site Acyl-thioester intermediate is Cys-144.

The protein belongs to the octanoyltransferase LipL family.

The enzyme catalyses N(6)-octanoyl-L-lysyl-[glycine-cleavage complex H protein] + L-lysyl-[lipoyl-carrier protein] = N(6)-octanoyl-L-lysyl-[lipoyl-carrier protein] + L-lysyl-[glycine-cleavage complex H protein]. It participates in protein modification; protein lipoylation via endogenous pathway; protein N(6)-(lipoyl)lysine from octanoyl-[acyl-carrier-protein]. Its function is as follows. Catalyzes the amidotransfer (transamidation) of the octanoyl moiety from octanoyl-GcvH to the lipoyl domain of the E2 subunit of lipoate-dependent enzymes. The chain is Octanoyl-[GcvH]:protein N-octanoyltransferase from Exiguobacterium sp. (strain ATCC BAA-1283 / AT1b).